A 299-amino-acid polypeptide reads, in one-letter code: Probable lipid kinase YegS (299 aa).

In terms of domain architecture, DAGKc spans 2-133 (AEFPASLLIL…IDMAQVNKQT (132 aa)). Residues Thr-40, 66 to 72 (GDGTINE), and Thr-95 contribute to the ATP site. Residues Leu-215, Asp-218, and Leu-220 each contribute to the Mg(2+) site. Residue Glu-271 is the Proton acceptor of the active site.

Belongs to the diacylglycerol/lipid kinase family. YegS lipid kinase subfamily. Mg(2+) is required as a cofactor. Requires Ca(2+) as cofactor.

It is found in the cytoplasm. Its function is as follows. Probably phosphorylates lipids; the in vivo substrate is unknown. In Escherichia coli O45:K1 (strain S88 / ExPEC), this protein is Probable lipid kinase YegS.